The sequence spans 152 residues: Xanthine-guanine phosphoribosyltransferase (152 aa).

Residues 37 to 38 (RG), R69, and 88 to 96 (DDLVDTGGT) contribute to the 5-phospho-alpha-D-ribose 1-diphosphate site. A GMP-binding site is contributed by R69. D89 provides a ligand contact to Mg(2+). Positions 92 and 135 each coordinate guanine. D92 and I135 together coordinate xanthine. GMP-binding positions include 92–96 (DTGGT) and 134–135 (WI).

Belongs to the purine/pyrimidine phosphoribosyltransferase family. XGPT subfamily. Homotetramer. Requires Mg(2+) as cofactor.

Its subcellular location is the cell inner membrane. The catalysed reaction is GMP + diphosphate = guanine + 5-phospho-alpha-D-ribose 1-diphosphate. It carries out the reaction XMP + diphosphate = xanthine + 5-phospho-alpha-D-ribose 1-diphosphate. The enzyme catalyses IMP + diphosphate = hypoxanthine + 5-phospho-alpha-D-ribose 1-diphosphate. It functions in the pathway purine metabolism; GMP biosynthesis via salvage pathway; GMP from guanine: step 1/1. The protein operates within purine metabolism; XMP biosynthesis via salvage pathway; XMP from xanthine: step 1/1. Functionally, purine salvage pathway enzyme that catalyzes the transfer of the ribosyl-5-phosphate group from 5-phospho-alpha-D-ribose 1-diphosphate (PRPP) to the N9 position of the 6-oxopurines guanine and xanthine to form the corresponding ribonucleotides GMP (guanosine 5'-monophosphate) and XMP (xanthosine 5'-monophosphate), with the release of PPi. To a lesser extent, also acts on hypoxanthine. The protein is Xanthine-guanine phosphoribosyltransferase of Salmonella choleraesuis (strain SC-B67).